Reading from the N-terminus, the 88-residue chain is Putative membrane protein insertion efficiency factor (88 aa).

The protein belongs to the UPF0161 family.

The protein localises to the cell inner membrane. Could be involved in insertion of integral membrane proteins into the membrane. The protein is Putative membrane protein insertion efficiency factor of Prochlorococcus marinus (strain MIT 9313).